Here is a 385-residue protein sequence, read N- to C-terminus: 1-deoxy-D-xylulose 5-phosphate reductoisomerase (385 aa).

The NADPH site is built by Thr13, Gly14, Ser15, Ile16, Asn40, and Asn122. Lys123 is a binding site for 1-deoxy-D-xylulose 5-phosphate. Glu124 contacts NADPH. Asp148 lines the Mn(2+) pocket. 1-deoxy-D-xylulose 5-phosphate contacts are provided by Ser149, Glu150, Ser177, and His200. Residue Glu150 participates in Mn(2+) binding. Residue Gly206 participates in NADPH binding. 1-deoxy-D-xylulose 5-phosphate contacts are provided by Ser213, Asn218, Lys219, and Glu222. Position 222 (Glu222) interacts with Mn(2+).

Belongs to the DXR family. Requires Mg(2+) as cofactor. It depends on Mn(2+) as a cofactor.

It carries out the reaction 2-C-methyl-D-erythritol 4-phosphate + NADP(+) = 1-deoxy-D-xylulose 5-phosphate + NADPH + H(+). It participates in isoprenoid biosynthesis; isopentenyl diphosphate biosynthesis via DXP pathway; isopentenyl diphosphate from 1-deoxy-D-xylulose 5-phosphate: step 1/6. Its function is as follows. Catalyzes the NADPH-dependent rearrangement and reduction of 1-deoxy-D-xylulose-5-phosphate (DXP) to 2-C-methyl-D-erythritol 4-phosphate (MEP). The sequence is that of 1-deoxy-D-xylulose 5-phosphate reductoisomerase from Francisella tularensis subsp. tularensis (strain WY96-3418).